The chain runs to 85 residues: Large ribosomal subunit protein bL27 (85 aa).

The interval 1–20 (MAHKKAGGSTRNGRDSESKR) is disordered.

It belongs to the bacterial ribosomal protein bL27 family.

The chain is Large ribosomal subunit protein bL27 from Yersinia pseudotuberculosis serotype O:1b (strain IP 31758).